A 287-amino-acid chain; its full sequence is Polyamine aminopropyltransferase (287 aa).

The region spanning 5–238 is the PABS domain; sequence EIWYETLHAN…GIMTFAWASN (234 aa). Gln33 serves as a coordination point for S-methyl-5'-thioadenosine. The spermidine site is built by His64 and Asp88. Residues Glu108 and 140 to 141 each bind S-methyl-5'-thioadenosine; that span reads DG. Asp158 (proton acceptor) is an active-site residue. 158–161 is a spermidine binding site; it reads DCTD. Pro165 serves as a coordination point for S-methyl-5'-thioadenosine.

The protein belongs to the spermidine/spermine synthase family. In terms of assembly, homodimer or homotetramer.

It localises to the cytoplasm. The catalysed reaction is S-adenosyl 3-(methylsulfanyl)propylamine + putrescine = S-methyl-5'-thioadenosine + spermidine + H(+). The protein operates within amine and polyamine biosynthesis; spermidine biosynthesis; spermidine from putrescine: step 1/1. In terms of biological role, catalyzes the irreversible transfer of a propylamine group from the amino donor S-adenosylmethioninamine (decarboxy-AdoMet) to putrescine (1,4-diaminobutane) to yield spermidine. This is Polyamine aminopropyltransferase from Pectobacterium carotovorum subsp. carotovorum (strain PC1).